Consider the following 98-residue polypeptide: MNEKGFTLVEMLIVLFIISILLLITIPNVTKHNQTIQKKGCEGLQNMVKAQMTAFELDHEGQTPSLADLQSEGYVKKDAVCPNGKRIIITGGEVKVEH.

Residues 1–5 (MNEKG) constitute a propeptide that is removed on maturation. A may be involved in polymerization of ComGC region spans residues 4–29 (KGFTLVEMLIVLFIISILLLITIPNV). F6 carries the post-translational modification N-methylphenylalanine. Residues 6 to 26 (FTLVEMLIVLFIISILLLITI) form a helical membrane-spanning segment. Cysteines 41 and 81 form a disulfide.

It belongs to the ComGC family. The transformation pili are flexible filaments, consisting mainly of the major pilin ComGC and smaller amounts of the minor pilins, including at least ComGD, ComGF and ComGG. Homodimer. Forms higher-order multimers. Interacts with ComGG; the interaction is probably direct. In terms of processing, processing of ComGC in competent cells requires ComC, while stabilization, possibly by formation of a disulfide bond, requires BdbC and BdbD.

Its subcellular location is the cell membrane. It localises to the cell surface. The protein localises to the fimbrium. In terms of biological role, major component of the type IV-like pilus (T4P) that plays a role in transformation. Transformation pili are dynamically extended and retracted, perhaps thereby promoting DNA uptake and transformation. Required for transformation and DNA binding. In Bacillus subtilis (strain 168), this protein is Competence protein ComGC (comGC).